The primary structure comprises 401 residues: Chalcone synthase 1 (401 aa).

Residue Cys-168 is part of the active site.

The protein belongs to the thiolase-like superfamily. Chalcone/stilbene synthases family.

It carries out the reaction (E)-4-coumaroyl-CoA + 3 malonyl-CoA + 3 H(+) = 2',4,4',6'-tetrahydroxychalcone + 3 CO2 + 4 CoA. It functions in the pathway secondary metabolite biosynthesis; flavonoid biosynthesis. Its function is as follows. The primary product of this enzyme is 4,2',4',6'-tetrahydroxychalcone (also termed naringenin-chalcone or chalcone) which can under specific conditions spontaneously isomerize into naringenin. The protein is Chalcone synthase 1 (CHS1) of Sorghum bicolor (Sorghum).